The sequence spans 105 residues: Small cysteine and glycine repeat-containing protein 10 (105 aa).

Residues 4-41 (CGCGGCGGRCSGGCGGGCGGGCGGGCGGGCGGCGGGCG) form a 10 X 2 AA repeats of CG region.

Belongs to the KRTAP type 28 family.

In terms of biological role, in the hair cortex, hair keratin intermediate filaments are embedded in an interfilamentous matrix, consisting of hair keratin-associated proteins (KRTAP), which are essential for the formation of a rigid and resistant hair shaft through their extensive disulfide bond cross-linking with abundant cysteine residues of hair keratins. The matrix proteins include the high-sulfur and high-glycine-tyrosine keratins. The sequence is that of Small cysteine and glycine repeat-containing protein 10 from Homo sapiens (Human).